Consider the following 203-residue polypeptide: Probable nicotinate-nucleotide adenylyltransferase (203 aa).

It belongs to the NadD family.

It carries out the reaction nicotinate beta-D-ribonucleotide + ATP + H(+) = deamido-NAD(+) + diphosphate. Its pathway is cofactor biosynthesis; NAD(+) biosynthesis; deamido-NAD(+) from nicotinate D-ribonucleotide: step 1/1. Functionally, catalyzes the reversible adenylation of nicotinate mononucleotide (NaMN) to nicotinic acid adenine dinucleotide (NaAD). The chain is Probable nicotinate-nucleotide adenylyltransferase from Clostridium kluyveri (strain ATCC 8527 / DSM 555 / NBRC 12016 / NCIMB 10680 / K1).